Consider the following 1012-residue polypeptide: Structural polyprotein (1012 aa).

Aspartate 30 provides a ligand contact to a divalent metal cation. The 242-residue stretch at 514-755 (ADKGYEVVAN…AGRQFHLALA (242 aa)) folds into the Peptidase S50 domain. Serine 653 (nucleophile) is an active-site residue. The active site involves lysine 692. The tract at residues 972 to 1012 (MKHRNPRRAPPKPKPKPNAPSQRPPGRLGRWIRTVSDEDLE) is disordered. The span at 975 to 986 (RNPRRAPPKPKP) shows a compositional bias: basic residues. An interaction with VP1 protein region spans residues 1003-1012 (IRTVSDEDLE).

Homotrimer. A central divalent metal stabilizes the VP2 trimer. Interacts with host ITGA4/ITGB1. In terms of assembly, homodimer. Interacts (via C-terminus) with VP1 in the cytoplasm. Interacts with VP2. Specific enzymatic cleavages yield mature proteins. The capsid assembly seems to be regulated by polyprotein processing. The protease VP4 cleaves itself off the polyprotein, thus releasing pre-VP2 and VP3 within the infected cell. During capsid assembly, the C-terminus of pre-VP2 is further processed by VP4, giving rise to VP2, the external capsid protein and three small peptides that all stay closely associated with the capsid.

Its subcellular location is the virion. The protein localises to the host cytoplasm. In terms of biological role, capsid protein VP2 self assembles to form an icosahedral capsid with a T=13 symmetry, about 70 nm in diameter, and consisting of 260 VP2 trimers. The capsid encapsulates the genomic dsRNA. VP2 is also involved in attachment and entry into the host cell by interacting with host ITGA4/ITGB1. Functionally, the precursor of VP2 plays an important role in capsid assembly. First, pre-VP2 and VP2 oligomers assemble to form a procapsid. Then, the pre-VP2 intermediates may be processed into VP2 proteins by proteolytic cleavage mediated by VP4 to obtain the mature virion. The final capsid is composed of pentamers and hexamers but VP2 has a natural tendency to assemble into all-pentameric structures. Therefore pre-VP2 may be required to allow formation of the hexameric structures. Its function is as follows. Protease VP4 is a serine protease that cleaves the polyprotein into its final products. Pre-VP2 is first partially cleaved, and may be completely processed by VP4 upon capsid maturation. Capsid protein VP3 plays a key role in virion assembly by providing a scaffold for the capsid made of VP2. May self-assemble to form a T=4-like icosahedral inner-capsid composed of at least 180 trimers. Plays a role in genomic RNA packaging by recruiting VP1 into the capsid and interacting with the dsRNA genome segments to form a ribonucleoprotein complex. Additionally, the interaction of the VP3 C-terminal tail with VP1 removes the inherent structural blockade of the polymerase active site. Thus, VP3 can also function as a transcriptional activator. In terms of biological role, structural peptide 1 is a small peptide derived from pre-VP2 C-terminus. It destabilizes and perforates cell membranes, suggesting a role during entry. Functionally, structural peptide 2 is a small peptide derived from pVP2 C-terminus. It is not essential for the virus viability, but viral growth is affected when missing. Its function is as follows. Structural peptide 3 is a small peptide derived from pVP2 C-terminus. It is not essential for the virus viability, but viral growth is affected when missing. Structural peptide 4 is a small peptide derived from pVP2 C-terminus. It is essential for the virus viability. This chain is Structural polyprotein, found in Gallus gallus (Chicken).